A 42-amino-acid chain; its full sequence is Potassium channel toxin gamma-KTx 1.10 (42 aa).

4 cysteine pairs are disulfide-bonded: Cys-5–Cys-23, Cys-11–Cys-34, Cys-20–Cys-39, and Cys-24–Cys-41.

In terms of tissue distribution, expressed by the venom gland.

It is found in the secreted. Its function is as follows. Blocks human Kv11.1/KCNH2/ERG1 potassium channels (reversible, IC(50)=3.4 nM). At high toxin concentrations, block of Kv11.1/KCNH2/ERG1 macroscopic current is almost complete. Does not accelerate the kinetics of the closing process and has no effect on the activation and inactivation kinetics of the Kv11.1/KCNH2/ERG1 channels. This chain is Potassium channel toxin gamma-KTx 1.10, found in Centruroides margaritatus (Central American bark Scorpion).